We begin with the raw amino-acid sequence, 282 residues long: uncharacterized protein (282 aa).

This is an uncharacterized protein from Escherichia coli (strain K12).